A 136-amino-acid chain; its full sequence is Protein NrdI (136 aa).

The protein belongs to the NrdI family.

Its function is as follows. Probably involved in ribonucleotide reductase function. The sequence is that of Protein NrdI from Escherichia coli (strain 55989 / EAEC).